The chain runs to 163 residues: Putative 4-hydroxy-4-methyl-2-oxoglutarate aldolase (163 aa).

Substrate contacts are provided by residues 76 to 79 (GDML) and Arg98. Asp99 is an a divalent metal cation binding site.

This sequence belongs to the class II aldolase/RraA-like family. In terms of assembly, homotrimer. It depends on a divalent metal cation as a cofactor.

It catalyses the reaction 4-hydroxy-4-methyl-2-oxoglutarate = 2 pyruvate. It carries out the reaction oxaloacetate + H(+) = pyruvate + CO2. Functionally, catalyzes the aldol cleavage of 4-hydroxy-4-methyl-2-oxoglutarate (HMG) into 2 molecules of pyruvate. Also contains a secondary oxaloacetate (OAA) decarboxylase activity due to the common pyruvate enolate transition state formed following C-C bond cleavage in the retro-aldol and decarboxylation reactions. This is Putative 4-hydroxy-4-methyl-2-oxoglutarate aldolase from Pseudomonas putida (strain ATCC 47054 / DSM 6125 / CFBP 8728 / NCIMB 11950 / KT2440).